Consider the following 408-residue polypeptide: Ribonuclease T2-like (408 aa).

Residues 1–25 (MLQSIPGPQHILKALTGSLGLSTIF) form the signal peptide. 4 cysteine pairs are disulfide-bonded: C38/C56, C45/C92, C55/C158, and C100/C150. H85 is a catalytic residue. N-linked (GlcNAc...) asparagine glycosylation is present at N108. Catalysis depends on residues E143 and H147. An N-linked (GlcNAc...) asparagine glycan is attached at N173. A disulfide bridge links C222 with C257. The disordered stretch occupies residues 268-292 (KHREPSRTTDTPSQPTTTGTPFKGR). The span at 275–288 (TTDTPSQPTTTGTP) shows a compositional bias: low complexity. Residue N372 is glycosylated (N-linked (GlcNAc...) asparagine).

This sequence belongs to the RNase T2 family.

The protein resides in the vacuole lumen. The protein localises to the cytoplasm. The enzyme catalyses a ribonucleotidyl-ribonucleotide-RNA + H2O = a 3'-end 3'-phospho-ribonucleotide-RNA + a 5'-end dephospho-ribonucleoside-RNA + H(+). Functionally, rnase which modulates cell survival under stress conditions. Released from the vacuole to the cytoplasm during stress to promote tRNA and rRNA cleavage and to activate separately a downstream pathway that promotes cell death. Involved in cell size, vacuolar morphology and growth at high temperatures and high salt concentration. The protein is Ribonuclease T2-like (rny1) of Aspergillus fumigatus (strain ATCC MYA-4609 / CBS 101355 / FGSC A1100 / Af293) (Neosartorya fumigata).